Consider the following 350-residue polypeptide: Cobalt-precorrin-5B C(1)-methyltransferase (350 aa).

Belongs to the CbiD family.

It catalyses the reaction Co-precorrin-5B + S-adenosyl-L-methionine = Co-precorrin-6A + S-adenosyl-L-homocysteine. It participates in cofactor biosynthesis; adenosylcobalamin biosynthesis; cob(II)yrinate a,c-diamide from sirohydrochlorin (anaerobic route): step 6/10. Its function is as follows. Catalyzes the methylation of C-1 in cobalt-precorrin-5B to form cobalt-precorrin-6A. The polypeptide is Cobalt-precorrin-5B C(1)-methyltransferase (Sulfurisphaera tokodaii (strain DSM 16993 / JCM 10545 / NBRC 100140 / 7) (Sulfolobus tokodaii)).